A 363-amino-acid chain; its full sequence is S-adenosylmethionine:tRNA ribosyltransferase-isomerase (363 aa).

The protein belongs to the QueA family. As to quaternary structure, monomer.

It localises to the cytoplasm. It carries out the reaction 7-aminomethyl-7-carbaguanosine(34) in tRNA + S-adenosyl-L-methionine = epoxyqueuosine(34) in tRNA + adenine + L-methionine + 2 H(+). It functions in the pathway tRNA modification; tRNA-queuosine biosynthesis. Its function is as follows. Transfers and isomerizes the ribose moiety from AdoMet to the 7-aminomethyl group of 7-deazaguanine (preQ1-tRNA) to give epoxyqueuosine (oQ-tRNA). The chain is S-adenosylmethionine:tRNA ribosyltransferase-isomerase from Haemophilus influenzae (strain PittGG).